The sequence spans 206 residues: MTALDSSRLLQPRTASVHRRTGETDVQIHLNLDGSGRHEIDTGIPFLDHMLAQLSTHGLIDLQIKAIGDLHIDDHHTNEDVGITLGQALAQALQDRRGIHRFGHFWAPLDEALVQVVLDFSGRPHLSYGLELPTERIGRYETQLVREFYQAVVNHAQLTLHIRQAAGLNAHHIVEASFKAFARALRMAVERDPRRQEGIPSSKGVL.

The tract at residues 1-21 is disordered; sequence MTALDSSRLLQPRTASVHRRT.

This sequence belongs to the imidazoleglycerol-phosphate dehydratase family.

It localises to the cytoplasm. The catalysed reaction is D-erythro-1-(imidazol-4-yl)glycerol 3-phosphate = 3-(imidazol-4-yl)-2-oxopropyl phosphate + H2O. The protein operates within amino-acid biosynthesis; L-histidine biosynthesis; L-histidine from 5-phospho-alpha-D-ribose 1-diphosphate: step 6/9. The chain is Imidazoleglycerol-phosphate dehydratase from Synechococcus sp. (strain JA-2-3B'a(2-13)) (Cyanobacteria bacterium Yellowstone B-Prime).